The following is a 793-amino-acid chain: Calcium permeable stress-gated cation channel 1 (793 aa).

Topologically, residues 1–21 (MAFNGYGIFDSDPRKNPSSDL) are lumenal. A helical membrane pass occupies residues 22 to 42 (RTQFWLAFLLGASACVFFCFF). Topologically, residues 43–95 (RKRWKVLYAPRTTIEGLNLPTLSSSYYKWLMDLVNIPDDVVQNCAGLDGYVFL) are cytoplasmic. The chain crosses the membrane as a helical span at residues 96–116 (LFFKMGIKFLSFASLLGVLII). Topologically, residues 117–192 (MPVNKHFRGD…IPGLPQPGDG (76 aa)) are lumenal. The helical transmembrane segment at 193-213 (FLYLYVLFTYFISIFLLYVLF) threads the bilayer. Topologically, residues 214 to 444 (SSTKSIADIR…HKFFQGWFIT (231 aa)) are cytoplasmic. Residues 445 to 465 (LVTFMIILLWTVPVGAIAVFI) traverse the membrane as a helical segment. Topologically, residues 466–493 (NLDTIRRLWPELGRMIEDLPFLNSLLRT) are lumenal. A helical transmembrane segment spans residues 494-514 (FLPTLVYSLFISISPFLFRWL). The Cytoplasmic segment spans residues 515–534 (SSMQGLSSRAEEEIYAVGKN). A helical membrane pass occupies residues 535 to 555 (YAYLFVNFFLVYVIAGSTSIW). Over 556 to 577 (ELAKDTTSFAHFLANRLPHQAQ) the chain is Lumenal. A helical membrane pass occupies residues 578–598 (FFIDLIVLQGIGMFPLKLIQL). Topologically, residues 599 to 646 (GKLSSYFVRRSFVPYSIASKKFETPDSFSVGIFLPQPMFIMLICLCYS) are cytoplasmic. The chain crosses the membrane as a helical span at residues 647–667 (IISPLILVFGLIYFIIGFLVY). Over 668-687 (KYELIYQMEHPQHSTGELWS) the chain is Lumenal. Residues 688–708 (TIFLRMIFGCVIMQLTMMGLM) traverse the membrane as a helical segment. At 709 to 713 (SLRKA) the chain is on the cytoplasmic side. The helical transmembrane segment at 714 to 734 (YWLSTVIFPLLCFTVISAYNF) threads the bilayer. Over 735 to 793 (STMIRSSMQFVSLYYIRTHQSNTLSSESESRNSESSGSYVHPGFDLSNEELPLIDLNTA) the chain is Lumenal. A disordered region spans residues 759 to 778 (SSESESRNSESSGSYVHPGF).

The protein belongs to the CSC1 (TC 1.A.17) family.

The protein resides in the vacuole membrane. In terms of biological role, acts as an osmosensitive calcium-permeable cation channel. The sequence is that of Calcium permeable stress-gated cation channel 1 from Schizosaccharomyces pombe (strain 972 / ATCC 24843) (Fission yeast).